Consider the following 129-residue polypeptide: Large ribosomal subunit protein bL12 (129 aa).

This sequence belongs to the bacterial ribosomal protein bL12 family. In terms of assembly, homodimer. Part of the ribosomal stalk of the 50S ribosomal subunit. Forms a multimeric L10(L12)X complex, where L10 forms an elongated spine to which 2 to 4 L12 dimers bind in a sequential fashion. Binds GTP-bound translation factors.

Functionally, forms part of the ribosomal stalk which helps the ribosome interact with GTP-bound translation factors. Is thus essential for accurate translation. The sequence is that of Large ribosomal subunit protein bL12 from Protochlamydia amoebophila (strain UWE25).